The sequence spans 195 residues: Imidazoleglycerol-phosphate dehydratase (195 aa).

It belongs to the imidazoleglycerol-phosphate dehydratase family.

It is found in the cytoplasm. It catalyses the reaction D-erythro-1-(imidazol-4-yl)glycerol 3-phosphate = 3-(imidazol-4-yl)-2-oxopropyl phosphate + H2O. It participates in amino-acid biosynthesis; L-histidine biosynthesis; L-histidine from 5-phospho-alpha-D-ribose 1-diphosphate: step 6/9. In Burkholderia vietnamiensis (strain G4 / LMG 22486) (Burkholderia cepacia (strain R1808)), this protein is Imidazoleglycerol-phosphate dehydratase.